A 624-amino-acid chain; its full sequence is Poly(A)-specific ribonuclease PARN (624 aa).

A divalent metal cation contacts are provided by D28 and E30. The region spanning K171–D238 is the R3H domain. K213 carries the post-translational modification N6-acetyllysine. Residues D285 and D375 each coordinate a divalent metal cation. K492 carries the N6-acetyllysine modification. The residue at position 523 (S523) is a Phosphoserine. Position 543 is a phosphoserine; by MAPKAPK2 (S543). The tract at residues G551–D612 is disordered. Positions R567–Q579 are enriched in acidic residues. Phosphoserine is present on residues S569, S573, and S575. Over residues K592–K601 the composition is skewed to basic residues. Phosphoserine is present on residues S605, S609, and S613.

This sequence belongs to the CAF1 family. Homodimer. Found in a mRNA decay complex with RENT1, RENT2 and RENT3B. Interacts with KHSRP. Interacts with CELF1/CUGBP1. Interacts with ZC3HAV1 in an RNA-independent manner. Interacts with DHX36. It depends on Mg(2+) as a cofactor. Post-translationally, phosphorylation by MAPKAPK2, preventing GADD45A mRNA degradation after genotoxic stress.

It localises to the nucleus. The protein localises to the cytoplasm. The protein resides in the nucleolus. It catalyses the reaction Exonucleolytic cleavage of poly(A) to 5'-AMP.. 3'-exoribonuclease that has a preference for poly(A) tails of mRNAs, thereby efficiently degrading poly(A) tails. Exonucleolytic degradation of the poly(A) tail is often the first step in the decay of eukaryotic mRNAs and is also used to silence certain maternal mRNAs translationally during oocyte maturation and early embryonic development. Interacts with both the 3'-end poly(A) tail and the 5'-end cap structure during degradation, the interaction with the cap structure being required for an efficient degradation of poly(A) tails. Involved in nonsense-mediated mRNA decay, a critical process of selective degradation of mRNAs that contain premature stop codons. Also involved in degradation of inherently unstable mRNAs that contain AU-rich elements (AREs) in their 3'-UTR, possibly via its interaction with KHSRP. Probably mediates the removal of poly(A) tails of AREs mRNAs, which constitutes the first step of destabilization. Also able to recognize poly(A) tails of microRNAs such as MIR21 and H/ACA box snoRNAs (small nucleolar RNAs) leading to leading to microRNAs degradation or snoRNA increased stability. This is Poly(A)-specific ribonuclease PARN (Parn) from Mus musculus (Mouse).